The chain runs to 1476 residues: SH3 and multiple ankyrin repeat domains protein 2 (1476 aa).

Polar residues predominate over residues 66-76 (LSPQLLQQTPS). A disordered region spans residues 66–134 (LSPQLLQQTP…GANKDSLSTF (69 aa)). An SH3 domain is found at 147 to 206 (VPGRLFVAVKPYQPQVDGEIPLHRGDRVKVLSIGEGGFWEGSARGHIGWFPAECVEEVQC). Valine 162 carries the phosphoserine modification. Positions 247–341 (TVVLQKKDNE…HLILKVVTVT (95 aa)) constitute a PDZ domain. Serine 372 is modified (phosphoserine). Residues 391–412 (RKKKDKPEEIVPASKPSRTAEN) form a disordered region. The residue at position 456 (serine 456) is a Phosphoserine. Phosphothreonine is present on threonine 485. Positions 503–533 (LSMPDTSEDIPPPPQSVPPSPPPPSPTTYNC) are disordered. Residues 512-528 (IPPPPQSVPPSPPPPSP) show a composition bias toward pro residues. The residue at position 586 (serine 586) is a Phosphoserine. Disordered stretches follow at residues 659 to 916 (TIIV…KDRR), 946 to 983 (VPMA…TEGA), and 1057 to 1153 (PALA…ESMD). Low complexity predominate over residues 666-678 (STSSSGKSSQGSS). Residues 711-722 (VRDREKRLEARR) show a composition bias toward basic and acidic residues. A Phosphoserine modification is found at serine 724. A compositionally biased stretch (gly residues) spans 783-795 (LGGGEAGAQGEAG). A compositionally biased stretch (low complexity) spans 833-846 (RLLDPSSPLALALS). Basic and acidic residues-rich tracts occupy residues 847 to 868 (ARDR…KADL) and 899 to 916 (RRQE…KDRR). Residue threonine 903 is modified to Phosphothreonine. A compositionally biased stretch (polar residues) spans 1070–1085 (TSQPPTLNSSQPANST). Over residues 1119 to 1130 (VDSRSSSDHHLE) the composition is skewed to basic and acidic residues. A compositionally biased stretch (low complexity) spans 1131 to 1151 (TTSTISTVSSISTLSSEGGES). Residues 1169-1175 (PPVPPKP) carry the SH3-binding motif. 2 disordered regions span residues 1195–1216 (EDTD…SAQA) and 1260–1403 (NRGK…ISNK). The span at 1202-1212 (IPPPAPPPPPG) shows a compositional bias: pro residues. A compositionally biased stretch (low complexity) spans 1291 to 1305 (STVSGTRSTTVTFTV). Threonine 1292 carries O-linked (GlcNAc) threonine glycosylation. Residues 1307–1317 (PGTSQPITLQS) are compositionally biased toward polar residues. Phosphoserine occurs at positions 1334 and 1338. Residues 1364–1375 (LSDVFSLPSQSP) show a composition bias toward polar residues. Over residues 1387–1401 (RSRSPSPSILQQPIS) the composition is skewed to low complexity. Residues 1413–1476 (WTKPDVADWL…ERALKQLLDR (64 aa)) enclose the SAM domain.

It belongs to the SHANK family. As to quaternary structure, is part of a complex with DLG4/PSD-95 and DLGAP1/GKAP. Interacts with CTTN/cortactin SH3 domain, DLGAP1/GKAP and alpha-latrotoxin receptor 1. Interacts with DNM2, DBNL, GRID2, BAIAP2, SLC9A3, PLCB3 and CFTR. Interacts (via proline-rich region) with PDE4D. Interacts with ABI1 (via SH3 domain). As to expression, detected in brain (at protein level), where it is highly expressed in Purkinje cells.

Its subcellular location is the apical cell membrane. The protein localises to the cytoplasm. The protein resides in the synapse. It localises to the postsynaptic density. It is found in the cell projection. Its subcellular location is the dendritic spine. The protein localises to the growth cone. Seems to be an adapter protein in the postsynaptic density (PSD) of excitatory synapses that interconnects receptors of the postsynaptic membrane including NMDA-type and metabotropic glutamate receptors, and the actin-based cytoskeleton. May play a role in the structural and functional organization of the dendritic spine and synaptic junction. This is SH3 and multiple ankyrin repeat domains protein 2 (Shank2) from Mus musculus (Mouse).